Consider the following 309-residue polypeptide: Ketosamine-3-kinase (309 aa).

A Phosphoserine modification is found at serine 20. Position 89 to 91 (89 to 91) interacts with ATP; sequence EHL. Aspartate 217 serves as the catalytic Proton acceptor.

The protein belongs to the fructosamine kinase family.

The enzyme catalyses N(6)-D-ribulosyl-L-lysyl-[protein] + ATP = N(6)-(3-O-phospho-D-ribulosyl)-L-lysyl-[protein] + ADP + H(+). It catalyses the reaction N(6)-(D-psicosyl)-L-lysyl-[protein] + ATP = N(6)-(3-O-phospho-D-psicosyl)-L-lysyl-[protein] + ADP + H(+). Ketosamine-3-kinase involved in protein deglycation by mediating phosphorylation of ribuloselysine and psicoselysine on glycated proteins, to generate ribuloselysine-3 phosphate and psicoselysine-3 phosphate, respectively. Ribuloselysine-3 phosphate and psicoselysine-3 phosphate adducts are unstable and decompose under physiological conditions. Not able to phosphorylate fructoselysine. In Mus musculus (Mouse), this protein is Ketosamine-3-kinase.